The following is a 375-amino-acid chain: Queuine tRNA-ribosyltransferase (375 aa).

The Proton acceptor role is filled by aspartate 90. Substrate-binding positions include 90–94 (DSGGF), aspartate 144, glutamine 190, and glycine 217. The RNA binding stretch occupies residues 248 to 254 (GIGTPHY). Catalysis depends on aspartate 267, which acts as the Nucleophile. The segment at 272-276 (TRIAR) is RNA binding; important for wobble base 34 recognition. Positions 305, 307, 310, and 336 each coordinate Zn(2+).

It belongs to the queuine tRNA-ribosyltransferase family. In terms of assembly, homodimer. Within each dimer, one monomer is responsible for RNA recognition and catalysis, while the other monomer binds to the replacement base PreQ1. It depends on Zn(2+) as a cofactor.

It carries out the reaction 7-aminomethyl-7-carbaguanine + guanosine(34) in tRNA = 7-aminomethyl-7-carbaguanosine(34) in tRNA + guanine. The protein operates within tRNA modification; tRNA-queuosine biosynthesis. Its function is as follows. Catalyzes the base-exchange of a guanine (G) residue with the queuine precursor 7-aminomethyl-7-deazaguanine (PreQ1) at position 34 (anticodon wobble position) in tRNAs with GU(N) anticodons (tRNA-Asp, -Asn, -His and -Tyr). Catalysis occurs through a double-displacement mechanism. The nucleophile active site attacks the C1' of nucleotide 34 to detach the guanine base from the RNA, forming a covalent enzyme-RNA intermediate. The proton acceptor active site deprotonates the incoming PreQ1, allowing a nucleophilic attack on the C1' of the ribose to form the product. After dissociation, two additional enzymatic reactions on the tRNA convert PreQ1 to queuine (Q), resulting in the hypermodified nucleoside queuosine (7-(((4,5-cis-dihydroxy-2-cyclopenten-1-yl)amino)methyl)-7-deazaguanosine). The polypeptide is Queuine tRNA-ribosyltransferase (Borrelia hermsii (strain HS1 / DAH)).